The primary structure comprises 872 residues: Homeobox-leucine zipper protein ROC6 (872 aa).

Disordered regions lie at residues 28–53 and 67–130; these read VHNSRLLPTPPVPKPGGGFAAPGLSL and NRSL…HRHT. Positions 74-85 are enriched in gly residues; that stretch reads GNGGSGSGGDGD. A compositionally biased stretch (basic and acidic residues) spans 86–99; it reads SLGRGREEENDSRS. Residues 119-130 are compositionally biased toward basic residues; sequence PRKKKKRYHRHT. The segment at residues 122 to 181 is a DNA-binding region (homeobox); it reads KKKRYHRHTPQQIQELEAVFKECPHPDEKQRMELSRRLNLESRQVKFWFQNRRTQMKQTQ. A coiled-coil region spans residues 176 to 248; it reads QMKQTQIERH…LKDELDRVCA (73 aa). An START domain is found at 340–583; that stretch reads GAIDRAVLLE…LQRQCQYLAI (244 aa). The tract at residues 792–818 is disordered; the sequence is HNNGASPSPAEVGSGASPNSAAGGGGG.

It belongs to the HD-ZIP homeobox family. Class IV subfamily.

The protein resides in the nucleus. Functionally, probable transcription factor. This Oryza sativa subsp. japonica (Rice) protein is Homeobox-leucine zipper protein ROC6 (ROC6).